A 41-amino-acid polypeptide reads, in one-letter code: Cuticle protein 32 (41 aa).

4 consecutive repeat copies span residues 17-20, 25-28, 31-34, and 38-41.

Its function is as follows. Component of the cuticle of migratory locust which contains more than 100 different structural proteins. This is Cuticle protein 32 from Locusta migratoria (Migratory locust).